A 218-amino-acid polypeptide reads, in one-letter code: Twisted gastrulation protein homolog 1-B (218 aa).

A signal peptide spans 1–25 (MKPSFLHIPAAALLLCSLWILPIHC). Residues Asn52, Asn81, and Asn147 are each glycosylated (N-linked (GlcNAc...) asparagine).

It belongs to the twisted gastrulation protein family. Binds directly to bmp2, bmp4 and bmp7 and can form a ternary complex with bmps and chordin, thus preventing the binding of bmps to their cell surface receptors.

The protein localises to the secreted. Its function is as follows. Involved in dorsal-ventral patterning, permitting peak BMP signaling by antagonizing the residual anti-BMP activity of the cleavage products of chrd. Functions to promote the formation of ventral mesoderm by increasing the activity of bmp7 and other BMPS. Seems to antagonize BMP signaling by forming ternary complexes with chrd and BMPs, thereby preventing BMPs from binding to their receptors. In addition to the anti-BMP function, also has pro-BMP activity, partly mediated by cleavage and degradation of chrd, which releases BMPs from ternary complexes. May be an important modulator of BMP-regulated cartilage development and chondrocyte differentiation. This Xenopus laevis (African clawed frog) protein is Twisted gastrulation protein homolog 1-B (twsg1-b).